Here is a 476-residue protein sequence, read N- to C-terminus: Siroheme synthase (476 aa).

Residues 1–203 (MNYFPVFADL…RQIEAAKKEL (203 aa)) are precorrin-2 dehydrogenase /sirohydrochlorin ferrochelatase. Residues 22–23 (TI) and 43–44 (QK) contribute to the NAD(+) site. Position 128 is a phosphoserine (Ser128). A uroporphyrinogen-III C-methyltransferase region spans residues 214 to 476 (GSVSLVGAGP…LDSLRIERVA (263 aa)). Residue Pro223 participates in S-adenosyl-L-methionine binding. The Proton acceptor role is filled by Asp246. The Proton donor role is filled by Lys268. Residues 299-301 (GGD), Val304, 329-330 (TA), Met381, and Gly410 contribute to the S-adenosyl-L-methionine site.

It in the N-terminal section; belongs to the precorrin-2 dehydrogenase / sirohydrochlorin ferrochelatase family. In the C-terminal section; belongs to the precorrin methyltransferase family.

It carries out the reaction uroporphyrinogen III + 2 S-adenosyl-L-methionine = precorrin-2 + 2 S-adenosyl-L-homocysteine + H(+). The catalysed reaction is precorrin-2 + NAD(+) = sirohydrochlorin + NADH + 2 H(+). The enzyme catalyses siroheme + 2 H(+) = sirohydrochlorin + Fe(2+). Its pathway is cofactor biosynthesis; adenosylcobalamin biosynthesis; precorrin-2 from uroporphyrinogen III: step 1/1. It participates in cofactor biosynthesis; adenosylcobalamin biosynthesis; sirohydrochlorin from precorrin-2: step 1/1. It functions in the pathway porphyrin-containing compound metabolism; siroheme biosynthesis; precorrin-2 from uroporphyrinogen III: step 1/1. The protein operates within porphyrin-containing compound metabolism; siroheme biosynthesis; siroheme from sirohydrochlorin: step 1/1. Its pathway is porphyrin-containing compound metabolism; siroheme biosynthesis; sirohydrochlorin from precorrin-2: step 1/1. In terms of biological role, multifunctional enzyme that catalyzes the SAM-dependent methylations of uroporphyrinogen III at position C-2 and C-7 to form precorrin-2 via precorrin-1. Then it catalyzes the NAD-dependent ring dehydrogenation of precorrin-2 to yield sirohydrochlorin. Finally, it catalyzes the ferrochelation of sirohydrochlorin to yield siroheme. The protein is Siroheme synthase of Mannheimia succiniciproducens (strain KCTC 0769BP / MBEL55E).